We begin with the raw amino-acid sequence, 1404 residues long: DNA-directed RNA polymerase subunit beta' (1404 aa).

C70, C72, C85, and C88 together coordinate Zn(2+). 3 residues coordinate Mg(2+): D460, D462, and D464. Positions 814, 888, 895, and 898 each coordinate Zn(2+).

Belongs to the RNA polymerase beta' chain family. In terms of assembly, the RNAP catalytic core consists of 2 alpha, 1 beta, 1 beta' and 1 omega subunit. When a sigma factor is associated with the core the holoenzyme is formed, which can initiate transcription. Mg(2+) is required as a cofactor. It depends on Zn(2+) as a cofactor.

The enzyme catalyses RNA(n) + a ribonucleoside 5'-triphosphate = RNA(n+1) + diphosphate. Functionally, DNA-dependent RNA polymerase catalyzes the transcription of DNA into RNA using the four ribonucleoside triphosphates as substrates. This Shewanella pealeana (strain ATCC 700345 / ANG-SQ1) protein is DNA-directed RNA polymerase subunit beta'.